The sequence spans 166 residues: Protein-export protein SecB (166 aa).

This sequence belongs to the SecB family. In terms of assembly, homotetramer, a dimer of dimers. One homotetramer interacts with 1 SecA dimer.

The protein resides in the cytoplasm. In terms of biological role, one of the proteins required for the normal export of preproteins out of the cell cytoplasm. It is a molecular chaperone that binds to a subset of precursor proteins, maintaining them in a translocation-competent state. It also specifically binds to its receptor SecA. This is Protein-export protein SecB from Acidiphilium cryptum (strain JF-5).